We begin with the raw amino-acid sequence, 674 residues long: Probable potassium transport system protein Kup (674 aa).

Transmembrane regions (helical) follow at residues 7-27 (IFWG…TSPL), 52-72 (LSLV…LIAL), 95-115 (WLIL…TLTP), 145-165 (LVTF…TSFI), 169-189 (FGPL…VNLI), 204-224 (LMLL…SVFL), 244-264 (IYLT…GQGA), 291-311 (VYLF…QALI), 342-362 (IYIR…LVYF), 368-388 (MEAA…ILLS), 397-417 (VVFN…FLIS), and 425-445 (GGYV…IWYF).

The protein belongs to the HAK/KUP transporter (TC 2.A.72) family.

It localises to the cell membrane. It catalyses the reaction K(+)(in) + H(+)(in) = K(+)(out) + H(+)(out). Transport of potassium into the cell. Likely operates as a K(+):H(+) symporter. The protein is Probable potassium transport system protein Kup of Ligilactobacillus salivarius (strain UCC118) (Lactobacillus salivarius).